A 428-amino-acid polypeptide reads, in one-letter code: CinA-like protein (428 aa).

Belongs to the CinA family.

The protein is CinA-like protein of Chlorobium phaeovibrioides (strain DSM 265 / 1930) (Prosthecochloris vibrioformis (strain DSM 265)).